Here is a 175-residue protein sequence, read N- to C-terminus: Ribulose bisphosphate carboxylase small subunit, chloroplastic (175 aa).

Residues 1 to 46 (MAPTVMASSATSVAPFQGLKSTAGLPVSRRSNGASLGSVSNGGRIR) constitute a chloroplast transit peptide.

The protein belongs to the RuBisCO small chain family. As to quaternary structure, heterohexadecamer of 8 large and 8 small subunits.

The protein resides in the plastid. Its subcellular location is the chloroplast. Functionally, ruBisCO catalyzes two reactions: the carboxylation of D-ribulose 1,5-bisphosphate, the primary event in carbon dioxide fixation, as well as the oxidative fragmentation of the pentose substrate. Both reactions occur simultaneously and in competition at the same active site. Although the small subunit is not catalytic it is essential for maximal activity. The sequence is that of Ribulose bisphosphate carboxylase small subunit, chloroplastic from Aegilops tauschii (Tausch's goatgrass).